A 673-amino-acid chain; its full sequence is UvrABC system protein B (673 aa).

One can recognise a Helicase ATP-binding domain in the interval 26–414; that stretch reads EGLEDGLAHQ…GGDVVDQVVR (389 aa). 39–46 serves as a coordination point for ATP; that stretch reads GVTGSGKT. The Beta-hairpin signature appears at 92–115; the sequence is YYDYYQPEAYVPSSDTFIEKDASV. Residues 431-597 enclose the Helicase C-terminal domain; it reads QVDDLLSEIR…GLNKKVVDIL (167 aa). Residues 633–668 form the UVR domain; it reads QQKIHELEGLMMQHAQNLEFEEAAQIRDQLHQLREL.

The protein belongs to the UvrB family. Forms a heterotetramer with UvrA during the search for lesions. Interacts with UvrC in an incision complex.

Its subcellular location is the cytoplasm. The UvrABC repair system catalyzes the recognition and processing of DNA lesions. A damage recognition complex composed of 2 UvrA and 2 UvrB subunits scans DNA for abnormalities. Upon binding of the UvrA(2)B(2) complex to a putative damaged site, the DNA wraps around one UvrB monomer. DNA wrap is dependent on ATP binding by UvrB and probably causes local melting of the DNA helix, facilitating insertion of UvrB beta-hairpin between the DNA strands. Then UvrB probes one DNA strand for the presence of a lesion. If a lesion is found the UvrA subunits dissociate and the UvrB-DNA preincision complex is formed. This complex is subsequently bound by UvrC and the second UvrB is released. If no lesion is found, the DNA wraps around the other UvrB subunit that will check the other stand for damage. This chain is UvrABC system protein B, found in Shigella flexneri.